A 249-amino-acid chain; its full sequence is MSGHNRWSKIKRQKAAMGATKGKLYSKVVKEITVASRLGGGEPSGNARLRVALAAAREANIPKDTIERAIKKGTGELEGENYEEVTYEGYGPGGVAILVECLTDNRNRTAADMRSTFSAYGGNLGAEGAVAWMFQKKGVISVKYGPSEDQLMEQAIDAGAEDVIMLGDEGSEVRTAAADLHTVAGRLQESGLPLGQQRWVFLPQNTVALDVDTVKKLLKLLDALEENDDVQNVHGNYEIEDAMLDSLLQ.

This sequence belongs to the TACO1 family.

It localises to the cytoplasm. This is Probable transcriptional regulatory protein MXAN_4974 from Myxococcus xanthus (strain DK1622).